We begin with the raw amino-acid sequence, 171 residues long: MDRAQKEQVVEELGQIFDASGVVVVARYEGMTVAEMQDLRAQMRDAGGSVRVAKNRLAKIALDGKPCASIADYLTGMTVLAFSDDPVAAAKVADKYAKGNDKFVILGGAMGDTALDPAGVKAVAQMPSREELIASIVACIGAPASNIAGAIGAPASNIAGILATLEEREAA.

The protein belongs to the universal ribosomal protein uL10 family. In terms of assembly, part of the ribosomal stalk of the 50S ribosomal subunit. The N-terminus interacts with L11 and the large rRNA to form the base of the stalk. The C-terminus forms an elongated spine to which L12 dimers bind in a sequential fashion forming a multimeric L10(L12)X complex.

Functionally, forms part of the ribosomal stalk, playing a central role in the interaction of the ribosome with GTP-bound translation factors. The protein is Large ribosomal subunit protein uL10 of Paracoccus denitrificans (strain Pd 1222).